We begin with the raw amino-acid sequence, 60 residues long: Mastoparan-VT4 (60 aa).

The signal sequence occupies residues 1 to 27; sequence MKNPILILFTAFIALLGFFGMSAEALA. 4 AXPX repeats span residues 27–30, 31–34, 35–38, and 41–44; these read ADPK, ADPL, AGPN, and ADPE. Residues 28 to 45 constitute a propeptide that is removed on maturation; that stretch reads DPKADPLAGPNPDADPEA. Leucine 59 carries the leucine amide modification.

Belongs to the MCD family. Mastoparan subfamily. As to expression, expressed by the venom gland.

Its subcellular location is the secreted. In terms of biological role, the synthetic peptide shows antimicrobial activities against Gram-negative bacteria (but not against all strains tested), Gram-positive bacteria (not all strains tested) and the fungi C.albicans and C.parapsilosis. Exhibits little hemolytic activity against washed human erythrocytes. The sequence is that of Mastoparan-VT4 from Vespa tropica (Greater banded hornet).